Consider the following 208-residue polypeptide: Small ribosomal subunit protein uS4 (208 aa).

One can recognise an S4 RNA-binding domain in the interval 98–161 (QRLDNVVFRM…KSNPQVVRAL (64 aa)).

This sequence belongs to the universal ribosomal protein uS4 family. Part of the 30S ribosomal subunit. Contacts protein S5. The interaction surface between S4 and S5 is involved in control of translational fidelity.

Functionally, one of the primary rRNA binding proteins, it binds directly to 16S rRNA where it nucleates assembly of the body of the 30S subunit. Its function is as follows. With S5 and S12 plays an important role in translational accuracy. The protein is Small ribosomal subunit protein uS4 of Aliarcobacter butzleri (strain RM4018) (Arcobacter butzleri).